Consider the following 311-residue polypeptide: MKGLVIKNTGSWYQLKTDRGELIKAKLKGNFRLKGIQSTNPISIGDYVLIEKDLYGTAFISTIEDRKNYIIRRASNLSKQSHIIATNLDQAFLIVTVNYPITTTIFIDRFLVTTEAYRIPTLLFFNKTDLYNNHDMNYADILIHLYKSIGYSCYKIAATKDEDLLFMEKLLRGKITLFYGHSGVGKSTIVNRLIPNAKQKVQSISKHHNKGMHTTTFSKMLELPSSSGYIIDTPGIKGFGIFDIEKEEISHYFPDIFRFSPYCKFYNCTHQKEPACAVREAIKNHYISKSRYISYINILEDVDMNKYREAF.

One can recognise a CP-type G domain in the interval 77–239; it reads LSKQSHIIAT…IIDTPGIKGF (163 aa). GTP is bound by residues 126-129 and 180-188; these read NKTD and GHSGVGKST. Zn(2+)-binding residues include cysteine 263, cysteine 268, histidine 270, and cysteine 276.

Belongs to the TRAFAC class YlqF/YawG GTPase family. RsgA subfamily. Monomer. Associates with 30S ribosomal subunit, binds 16S rRNA. It depends on Zn(2+) as a cofactor.

It is found in the cytoplasm. Functionally, one of several proteins that assist in the late maturation steps of the functional core of the 30S ribosomal subunit. Helps release RbfA from mature subunits. May play a role in the assembly of ribosomal proteins into the subunit. Circularly permuted GTPase that catalyzes slow GTP hydrolysis, GTPase activity is stimulated by the 30S ribosomal subunit. The protein is Small ribosomal subunit biogenesis GTPase RsgA of Azobacteroides pseudotrichonymphae genomovar. CFP2.